Consider the following 244-residue polypeptide: Transcriptional activator protein FnrA (244 aa).

Positions 159-232 constitute an HTH crp-type domain; the sequence is KTADERIATF…GKEVRILDSI (74 aa). Residues 192–211 constitute a DNA-binding region (H-T-H motif); it reads RNEIGNYLGLAVETVSRVFT.

In terms of biological role, transcriptional regulator of arginine deiminase. The sequence is that of Transcriptional activator protein FnrA (fnrA) from Stutzerimonas stutzeri (Pseudomonas stutzeri).